A 955-amino-acid chain; its full sequence is UPF0182 protein tll1193 (955 aa).

9 helical membrane-spanning segments follow: residues 6–26 (VVPLMPPWLRWLCGLVLAIAL), 53–73 (WSVQALLFLAVAGVSQLFYGC), 98–118 (GLGLWQLLLCAGSLNWLLIVA), 163–183 (WLLGLSLVAVILGLWLPVGLF), 186–206 (LGILLSLAMGAIASLSWPVVL), 240–260 (LWLVNLSVVGLGGTTLGYLLA), 280–300 (LQGLSAFVFATVALSFWLERY), 324–344 (LYGWLSASAFGVACLLAWSAI), and 354–374 (GPIAPGLFGFTLGYLGVILIV).

It belongs to the UPF0182 family.

It is found in the cell membrane. The protein is UPF0182 protein tll1193 of Thermosynechococcus vestitus (strain NIES-2133 / IAM M-273 / BP-1).